A 194-amino-acid polypeptide reads, in one-letter code: Mitochondrial import inner membrane translocase subunit Tim22 (194 aa).

Intrachain disulfides connect Cys-69–Cys-141 and Cys-160–Cys-179. The next 3 helical transmembrane spans lie at Ala-74–Ile-94, Met-123–Ile-143, and Ala-170–Asp-190.

The protein belongs to the Tim17/Tim22/Tim23 family. As to quaternary structure, component of the TIM22 complex, whose core is composed of TIMM22, associated with peripheral protein FXC1/TIMM10B and the 70 kDa heterohexamer. In most cases, the 70 kDa complex is composed of TIMM9 and TIMM10 (TIMM10A or TIMM10B). A small fraction of the 70 kDa complex is composed of TIMM8 (TIMM8A/DDP1 or TIMM8B/DDP2) and TIMM13. The TIM22 complex also contains AGK and TIMM29. Interacts directly with TIMM9, TIMM10A and FXC1/TIMM10B. Interacts (when oxidized) with TIMM29; interaction is direct. In terms of processing, disulfide bonds promote efficient assembly of the TIM22 complex.

The protein resides in the mitochondrion inner membrane. Essential core component of the TIM22 complex, a complex that mediates the import and insertion of multi-pass transmembrane proteins into the mitochondrial inner membrane. In the TIM22 complex, it constitutes the voltage-activated and signal-gated channel. Forms a twin-pore translocase that uses the membrane potential as external driving force in 2 voltage-dependent steps. This chain is Mitochondrial import inner membrane translocase subunit Tim22 (TIMM22), found in Homo sapiens (Human).